We begin with the raw amino-acid sequence, 915 residues long: Transferrin-binding protein A (915 aa).

Residues 1 to 24 (MQQQHLFRFNILCLSLMTALPAYA) form the signal peptide. The Periplasmic segment spans residues 25–187 (ENVQAGQAQE…ADDVIGEGRQ (163 aa)). A TonB box motif is present at residues 38-45 (DTIQVKAK). The TBDR plug domain maps to 51–176 (RDNEVTGLGK…LAGSVAFQTK (126 aa)). The interval 121–139 (SYTAQAALGGTRTAGSSGA) is plug loop, interacts with transferrin. Residues 187–915 (QWGIQSKTAY…NYTFSLEMKF (729 aa)) enclose the TBDR beta-barrel domain. A beta stranded transmembrane segment spans residues 188 to 197 (WGIQSKTAYS). The Extracellular segment spans residues 198-203 (GKNRGL). A beta stranded transmembrane segment spans residues 204–213 (TQSIALAGRI). Topologically, residues 214-215 (GG) are periplasmic. Residues 216–225 (AEALLIHTGR) form a beta stranded membrane-spanning segment. Residues 226–309 (RAGEIRAHED…FLADPLSYES (84 aa)) are Extracellular-facing. Residues 310–319 (RSWLFRPGFR) form a beta stranded membrane-spanning segment. Over 320-324 (FENKR) the chain is Periplasmic. Residues 325 to 334 (HYIGGILEHT) form a beta stranded membrane-spanning segment. Over 335–406 (QQTFDTRDMT…VFYDETHTKS (72 aa)) the chain is Extracellular. The tract at residues 351 to 361 (KAVFDANKKQA) is L3 helix finger, interacts with transferrin. Residues 407–415 (RYGLEYVYT) traverse the membrane as a beta stranded segment. Residues 416–423 (NADKDTWA) lie on the Periplasmic side of the membrane. A beta stranded membrane pass occupies residues 424–433 (DYARLSYDRQ). Topologically, residues 434–478 (GIGLDNHFQQTHCSADGSDKYCRPSADKPFSYYKSDRVIYGESHR) are extracellular. The chain crosses the membrane as a beta stranded span at residues 479–488 (LLQAAFKKSF). The Periplasmic portion of the chain corresponds to 489 to 494 (DTAKIR). A beta stranded transmembrane segment spans residues 495 to 504 (HNLSVNLGFD). Over 505–583 (RFGSNLRHQD…PRSINGKSYY (79 aa)) the chain is Extracellular. A disordered region spans residues 523 to 542 (AYSSNTPPQNNGKKISPNGS). The beta stranded transmembrane segment at 584–592 (AAVRDNVRL) threads the bilayer. At 593–594 (GR) the chain is on the periplasmic side. The chain crosses the membrane as a beta stranded span at residues 595-603 (WADVGAGLR). Topologically, residues 604-623 (YDYRSTHSDDGSVSTGTHRT) are extracellular. The chain crosses the membrane as a beta stranded span at residues 624 to 633 (LSWNAGIVLK). Residues 634 to 637 (PTDW) are Periplasmic-facing. A beta stranded transmembrane segment spans residues 638-647 (LDLTYRTSTG). The Extracellular segment spans residues 648-675 (FRLPSFAEMYGWRAGVQSKAVKIDPEKS). A beta stranded membrane pass occupies residues 676–685 (FNKEAGIVFK). Topologically, residues 686 to 689 (GDFG) are periplasmic. Residues 690-699 (NLEASWFNNA) traverse the membrane as a beta stranded segment. The Extracellular portion of the chain corresponds to 700 to 733 (YRDLIVRGYEAQIKDGKEEAKGDPAYLNAQSARI). A beta stranded membrane pass occupies residues 734 to 743 (TGINILGKID). Over 744–755 (WNGVWDKLPEGW) the chain is Periplasmic. Residues 756-765 (YSTFAYNRVR) traverse the membrane as a beta stranded segment. Over 766–790 (VRDIKKRADRTDIQSHLFDAIQPSR) the chain is Extracellular. Residues 791–799 (YVVGLGYDQ) traverse the membrane as a beta stranded segment. The Periplasmic portion of the chain corresponds to 800-802 (PEG). Residues 803-811 (KWGVNGMLT) traverse the membrane as a beta stranded segment. The Extracellular segment spans residues 812-845 (YSKAKEITELLGSRALLNGNSRNTKATARRTRPW). A beta stranded membrane pass occupies residues 846–855 (YIVDVSGYYT). Over 856–860 (VKKHF) the chain is Periplasmic. A beta stranded membrane pass occupies residues 861-870 (TLRAGVYNLL). The Extracellular portion of the chain corresponds to 871 to 905 (NYRYVTWENVRQTAGGAVNQHKNVGVYNRYAAPGR). The TonB C-terminal box motif lies at 898-915 (NRYAAPGRNYTFSLEMKF). The beta stranded transmembrane segment at 906–915 (NYTFSLEMKF) threads the bilayer.

This sequence belongs to the TonB-dependent receptor family. As to quaternary structure, binds both human apo- and holo-transferrin (TF), via the TF C-terminus. Forms a large complex with TF and TbpB.

Its subcellular location is the cell outer membrane. Functionally, neisseria acquires iron by extracting it from serum transferrin (TF) in its human host. Acts as a TF receptor and is required for TF utilization. Binds both apo- and holo-TF, via the TF C-terminus. This chain is Transferrin-binding protein A, found in Neisseria meningitidis serogroup B (strain ATCC BAA-335 / MC58).